We begin with the raw amino-acid sequence, 391 residues long: Galactarate dehydratase (D-threo-forming) (391 aa).

Residue R15 coordinates substrate. Residues D42 and H45 each coordinate Mg(2+). Substrate is bound at residue Y89. Residue Y90 is the Proton donor of the active site. Y164 acts as the Proton acceptor in catalysis. D193, E221, and H246 together coordinate Mg(2+). T296 is a substrate binding site. T297 contacts Mg(2+). A substrate-binding site is contributed by R385.

It belongs to the mandelate racemase/muconate lactonizing enzyme family. Requires Mg(2+) as cofactor.

It catalyses the reaction galactarate = (2S,3R)-dihydroxy-5-oxohexanedioate + H2O. Its function is as follows. Catalyzes the regioselective dehydration of galactarate into 2-keto-D-threo-4,5-dihydroxyadipate ((2S,3R)-dihydroxy-5-oxohexanedioate). Is not active on other acid sugars. This chain is Galactarate dehydratase (D-threo-forming), found in Oceanobacillus iheyensis (strain DSM 14371 / CIP 107618 / JCM 11309 / KCTC 3954 / HTE831).